We begin with the raw amino-acid sequence, 692 residues long: Vitamin B12-dependent ribonucleoside-diphosphate reductase (692 aa).

In terms of domain architecture, ATP-cone spans 7–95 (AKVRRRDGTL…IYRQRRAELR (89 aa)). Substrate contacts are provided by residues serine 177, 192-193 (GC), glycine 221, 375-379 (NPCGE), and 520-524 (PTGTI). A disulfide bond links cysteine 193 and cysteine 388. Residue asparagine 375 is the Proton acceptor of the active site. Residue cysteine 377 is the Cysteine radical intermediate of the active site. Residue glutamate 379 is the Proton acceptor of the active site.

This sequence belongs to the ribonucleoside diphosphate reductase class-2 family. Adenosylcob(III)alamin is required as a cofactor.

The catalysed reaction is a 2'-deoxyribonucleoside 5'-diphosphate + [thioredoxin]-disulfide + H2O = a ribonucleoside 5'-diphosphate + [thioredoxin]-dithiol. In terms of biological role, provides the precursors necessary for DNA synthesis. Catalyzes the biosynthesis of deoxyribonucleotides from the corresponding ribonucleotides. This is Vitamin B12-dependent ribonucleoside-diphosphate reductase (nrdZ) from Mycobacterium tuberculosis (strain CDC 1551 / Oshkosh).